A 202-amino-acid polypeptide reads, in one-letter code: Small ribosomal subunit protein uS4 (202 aa).

The 64-residue stretch at 91 to 154 (SMLSSVLYNS…VNLPSVLAAI (64 aa)) folds into the S4 RNA-binding domain.

Belongs to the universal ribosomal protein uS4 family. In terms of assembly, part of the 30S ribosomal subunit. Contacts protein S5. The interaction surface between S4 and S5 is involved in control of translational fidelity.

Its function is as follows. One of the primary rRNA binding proteins, it binds directly to 16S rRNA where it nucleates assembly of the body of the 30S subunit. Functionally, with S5 and S12 plays an important role in translational accuracy. The protein is Small ribosomal subunit protein uS4 of Ehrlichia ruminantium (strain Gardel).